A 123-amino-acid chain; its full sequence is Fluoride-specific ion channel FluC 1 (123 aa).

A run of 3 helical transmembrane segments spans residues 33 to 53 (TFLINISGAFVIGYLSVLFGV), 59 to 79 (YGTMLNAGVLTGILGGYTTFS), and 98 to 118 (VFYLVASVLSGLFAAWLGAML). The Na(+) site is built by G73 and T76.

It belongs to the fluoride channel Fluc/FEX (TC 1.A.43) family.

The protein resides in the cell inner membrane. The catalysed reaction is fluoride(in) = fluoride(out). Na(+) is not transported, but it plays an essential structural role and its presence is essential for fluoride channel function. Functionally, fluoride-specific ion channel. Important for reducing fluoride concentration in the cell, thus reducing its toxicity. The sequence is that of Fluoride-specific ion channel FluC 1 from Brucella melitensis biotype 1 (strain ATCC 23456 / CCUG 17765 / NCTC 10094 / 16M).